Reading from the N-terminus, the 418-residue chain is Mitochondrial outer membrane protein SLC25A46 (418 aa).

A phosphoserine mark is found at Ser32 and Ser35. The residue at position 45 (Thr45) is a Phosphothreonine. The interval 46–96 (PPDIPGSRNLHWGEKSPSYGVPSAPPTLEGPAEEPFPGGGDGPRPGRSSEQ) is disordered. Residues 96 to 187 (QLNRFAGFGI…GIISEFTPLP (92 aa)) form a Solcar 1 repeat. 6 helical membrane-spanning segments follow: residues 103–123 (FGIG…CIVL), 167–187 (FIVQ…TPLP), 202–222 (HLLL…ASLI), 258–278 (LLPL…HYII), 314–334 (FPEL…LYPL), and 382–402 (VFGF…HATI). The stretch at 311–416 (DAYFPELIAN…KIIYSTLLQN (106 aa)) is one Solcar 2 repeat.

This sequence belongs to the mitochondrial carrier (TC 2.A.29) family. Associates with the mitochondrial contact site and cristae organizing system (MICOS) complex. May associate with the endoplasmic reticulum membrane protein complex (EMC). In terms of tissue distribution, widely expressed. Highly expressed in hindbrain, spinal cord and brain coronal sections containing corpus callosum, fornix, optic chiasm, thalamus, hypothalamus, midbrain, pons and cerebellum.

It is found in the mitochondrion outer membrane. Transmembrane protein of the mitochondrial outer membrane that controls mitochondrial organization. May regulate the assembly of the MICOS (mitochondrial contact site and cristae organizing system) complex which is essential to the biogenesis and dynamics of mitochondrial cristae, the inwards folds of the inner mitochondrial membrane. Through its interaction with the EMC (endoplasmic reticulum membrane protein complex), could regulate mitochondrial lipid homeostasis and thereby mitochondrial fission. This Rattus norvegicus (Rat) protein is Mitochondrial outer membrane protein SLC25A46.